The sequence spans 273 residues: Cysteine protease S273R (273 aa).

Active-site residues include His168 and Asn187. A substrate-binding site is contributed by Gln226. Cys232 (nucleophile) is an active-site residue.

It belongs to the peptidase C63 family.

It is found in the host cytoplasm. It localises to the virion. Functionally, cysteine protease that plays several role during infection including processing of the structural polyprotein or inhibition of the host immune response. Catalyzes the maturation of the pp220 and pp62 polyprotein precursors into core-shell proteins. Plays a role in the disruption of host pyroptosis via specific cleavage of gasdermin D/GSDMD. In addition, strongly decreases the host cGAS-STING signaling by targeting IKBKE via its enzymatic activity. Also impairs host FOXJ1-mediated antiviral effect via degradation of FOXJ1. Cleaves host G3BP1 inducing loss of stress granules formation. Interacts with and induces the degradation of host STAT2 via polyubiquitination of the latter. The chain is Cysteine protease S273R from Ornithodoros (relapsing fever ticks).